The primary structure comprises 393 residues: 2-nitroimidazole transporter (393 aa).

At 1-12 (MTCSTSLSGKNR) the chain is on the cytoplasmic side. Residues 13 to 33 (IVLIAGILMIATTLRVTFTGA) form a helical membrane-spanning segment. Topologically, residues 34 to 52 (APLLDTIRSAYSLTTAQTG) are periplasmic. Residues 53 to 73 (LLTTLPLLAFALISPLAAPVA) form a helical membrane-spanning segment. Residues 74-80 (RRFGMER) are Cytoplasmic-facing. 2 helical membrane-spanning segments follow: residues 81–101 (SLFA…LPSP) and 102–122 (YLLF…NVLL). The Cytoplasmic portion of the chain corresponds to 123–140 (PGLIKRDFPHSVARLTGA). The chain crosses the membrane as a helical span at residues 141 to 161 (YSLTMGAAAALGSAMVVPLAL). At 162–163 (NG) the chain is on the periplasmic side. The chain crosses the membrane as a helical span at residues 164-184 (FGWQGALLMLMCFPLLALFLW). At 185-218 (LPQWRSQQHANLSTSRALHTRGIWRSPLAWQVTL) the chain is on the cytoplasmic side. The helical transmembrane segment at 219 to 239 (FLGINSLVYYVIIGWLPAILI) threads the bilayer. Residues 240–249 (SHGYSEAQAG) lie on the Periplasmic side of the membrane. A helical transmembrane segment spans residues 250 to 270 (SLHGLLQLATAAPGLLIPLFL). Residues 271 to 278 (HHVKDQRG) are Cytoplasmic-facing. A helical transmembrane segment spans residues 279-299 (IAAFVALMCAVGAVGLCFMPA). Over 300 to 304 (HAITW) the chain is Periplasmic. Residues 305-325 (TLLFGFGSGATMILGLTFIGL) form a helical membrane-spanning segment. Residues 326-334 (RASSAHQAA) lie on the Cytoplasmic side of the membrane. Residues 335-355 (ALSGMAQSVGYLLAACGPPLM) form a helical membrane-spanning segment. Over 356–366 (GKIHDANGNWS) the chain is Periplasmic. The chain crosses the membrane as a helical span at residues 367 to 387 (VPLMGVAILSLLMAIFGLCAG). At 388-393 (RDKEIR) the chain is on the cytoplasmic side.

It belongs to the major facilitator superfamily. Cyanate porter (TC 2.A.1.17) family.

It is found in the cell inner membrane. Involved in efflux of 2-nitroimidazole. The sequence is that of 2-nitroimidazole transporter from Escherichia coli (strain K12).